The primary structure comprises 405 residues: CMP-sialic acid transporter 4 (405 aa).

At 1 to 43 the chain is on the cytoplasmic side; it reads MQRNGVMECSVCHSKVVAPSPRSVSRAYDKHRSKISSKYRALN. Residues 44–64 traverse the membrane as a helical segment; that stretch reads FLLVSGDCILVGLQPILVFMS. Over 65 to 74 the chain is Lumenal; that stretch reads KVDGKFQFSP. The chain crosses the membrane as a helical span at residues 75–95; it reads ISVNFLTEVTKVIFAIVMLII. The Cytoplasmic segment spans residues 96 to 121; sequence QSRKQKVGEKPLLSLSTFVQAARNNA. The chain crosses the membrane as a helical span at residues 122-142; sequence LLAVPALLYAINNYLKFIMQL. Residue Tyr143 is a topological domain, lumenal. A helical transmembrane segment spans residues 144 to 164; it reads FSPATVKMLSNLKVLVIAILL. The Cytoplasmic segment spans residues 165–171; the sequence is KFIMRRK. The chain crosses the membrane as a helical span at residues 172-192; the sequence is FSIIQWEALALLLIGISVNQL. The Lumenal portion of the chain corresponds to 193-203; sequence SSIPDGTKSFG. A helical membrane pass occupies residues 204 to 224; sequence LAVTTIAYIYTLIFVTVPSLA. Residues 225–244 lie on the Cytoplasmic side of the membrane; it reads SVYNEYALKSQFDTSIYLQN. The helical transmembrane segment at 245–265 threads the bilayer; that stretch reads LFLYGYGAIFNFLGILGTVIF. At 266-281 the chain is on the lumenal side; it reads QGPESFDILQGHSRAT. A helical membrane pass occupies residues 282–302; sequence MFLICNNAAQGILSSFFFKYA. Residues 303–322 are Cytoplasmic-facing; sequence DTILKKYSSTVATIFTGLAS. Residues 323–343 traverse the membrane as a helical segment; sequence AAFLGHTLTVNFLLGISIVFI. Residues 344–405 lie on the Lumenal side of the membrane; the sequence is SMHQFFSPLA…TDERKPLLPI (62 aa). Residues 386 to 405 form a disordered region; the sequence is AADDASHLTSTDERKPLLPI. Basic and acidic residues predominate over residues 389–405; sequence DASHLTSTDERKPLLPI.

It belongs to the nucleotide-sugar transporter family. CMP-Sialate:CMP antiporter (TC 2.A.7.12) subfamily.

Its subcellular location is the golgi apparatus membrane. Sugar transporter involved in the transport of CMP-sialic acid from the cytoplasm into the Golgi. May transport important nucleotide sugars such as CMP-Kdo (2-keto-3-deoxy-D-manno-octulosonic acid) in physiological conditions. The chain is CMP-sialic acid transporter 4 from Oryza sativa subsp. indica (Rice).